The primary structure comprises 168 residues: uncharacterized protein (168 aa).

2 consecutive transmembrane segments (helical) span residues 27-47 (NWLV…RISG) and 147-167 (IENG…QVMF).

It is found in the membrane. This is an uncharacterized protein from Saccharomyces cerevisiae (strain ATCC 204508 / S288c) (Baker's yeast).